Here is a 376-residue protein sequence, read N- to C-terminus: MSSETLKFARELISRPSITPEDEGCQQLIGERLAAQGFNLESMIFEDTTNLWARRGQGRKLFCFAGHTDVVPPGDINDWQFPPFEPTTHEGYLYGRGAADMKGSLAAMITATERFIKDYPNVDADIGFLITSDEEGPFINGTKRVIETLQERNENIDWCIVGEPSSTDTLGDIVKNGRRGSLTGDLTVLGIQGHVAYPHLAKNPVHDLAPALSELINEEWDQGNASFPPTTFQVSNIQAGTGAGNVIPGRIDTQFNFRFSTELTAEKIKQRVEAILDKHSLKYHLQWKLNGPPFLTESGALVEAVQAAIEHECGFSTTLSTAGGTSDGRFIAPTGAQVIELGPVNATIHKVNECVKISDLDKLSDVYYRCLEKLLC.

A Zn(2+)-binding site is contributed by histidine 67. The active site involves aspartate 69. Aspartate 100 contacts Zn(2+). Glutamate 134 functions as the Proton acceptor in the catalytic mechanism. 3 residues coordinate Zn(2+): glutamate 135, glutamate 163, and histidine 349.

Belongs to the peptidase M20A family. DapE subfamily. In terms of assembly, homodimer. The cofactor is Zn(2+). Co(2+) serves as cofactor.

It catalyses the reaction N-succinyl-(2S,6S)-2,6-diaminopimelate + H2O = (2S,6S)-2,6-diaminopimelate + succinate. Its pathway is amino-acid biosynthesis; L-lysine biosynthesis via DAP pathway; LL-2,6-diaminopimelate from (S)-tetrahydrodipicolinate (succinylase route): step 3/3. Its function is as follows. Catalyzes the hydrolysis of N-succinyl-L,L-diaminopimelic acid (SDAP), forming succinate and LL-2,6-diaminopimelate (DAP), an intermediate involved in the bacterial biosynthesis of lysine and meso-diaminopimelic acid, an essential component of bacterial cell walls. In Idiomarina loihiensis (strain ATCC BAA-735 / DSM 15497 / L2-TR), this protein is Succinyl-diaminopimelate desuccinylase.